The primary structure comprises 442 residues: Glutamyl-tRNA reductase (442 aa).

Substrate contacts are provided by residues 49–52 (TCNR), serine 109, 114–116 (ESQ), and glutamine 120. Cysteine 50 acts as the Nucleophile in catalysis. Position 189–194 (189–194 (GAGAMS)) interacts with NADP(+).

The protein belongs to the glutamyl-tRNA reductase family. As to quaternary structure, homodimer.

The catalysed reaction is (S)-4-amino-5-oxopentanoate + tRNA(Glu) + NADP(+) = L-glutamyl-tRNA(Glu) + NADPH + H(+). It participates in porphyrin-containing compound metabolism; protoporphyrin-IX biosynthesis; 5-aminolevulinate from L-glutamyl-tRNA(Glu): step 1/2. Functionally, catalyzes the NADPH-dependent reduction of glutamyl-tRNA(Glu) to glutamate 1-semialdehyde (GSA). This chain is Glutamyl-tRNA reductase, found in Kineococcus radiotolerans (strain ATCC BAA-149 / DSM 14245 / SRS30216).